A 472-amino-acid polypeptide reads, in one-letter code: H(+)/Cl(-) exchange transporter ClcA (472 aa).

The Cytoplasmic segment spans residues Met-1–Pro-32. A helical membrane pass occupies residues Leu-33 to Ala-69. The Periplasmic segment spans residues Gln-70–Tyr-76. The chain crosses the membrane as a helical span at residues Leu-77–Phe-100. The Selectivity filter part_1 motif lies at Gly-106–Pro-110. Position 107 (Ser-107) interacts with chloride. An intramembrane region (helical) is located at residues Ile-109–Leu-116. The Cytoplasmic portion of the chain corresponds to Glu-117–Arg-123. Transmembrane regions (helical) follow at residues Trp-124–Ala-141 and Glu-148–Phe-166. Residues Gly-146 to Pro-150 carry the Selectivity filter part_2 motif. Topologically, residues Arg-167–Thr-176 are cytoplasmic. 2 intramembrane regions (helical) span residues Leu-177–Ala-189 and Pro-193–Ile-201. The Cytoplasmic portion of the chain corresponds to Glu-202–Ser-214. The helical transmembrane segment at Ile-215 to Phe-232 threads the bilayer. The Periplasmic portion of the chain corresponds to Asn-233–Leu-252. The chain crosses the membrane as a helical span at residues Trp-253–Gln-281. At Arg-282–Asn-287 the chain is on the cytoplasmic side. Residues Ile-288–Gln-309 traverse the membrane as a helical segment. Topologically, residues Pro-310–Ser-329 are periplasmic. Transmembrane regions (helical) follow at residues Val-330–Ser-349 and Gly-355–Ile-376. Positions Gly-355–Pro-359 match the Selectivity filter part_3 motif. The chloride site is built by Ile-356 and Phe-357. The Periplasmic portion of the chain corresponds to Pro-377–Ala-386. Positions Gly-387–Ser-401 form an intramembrane region, helical. Residues Val-402 to Ala-404 constitute an intramembrane region (note=Loop between two helices). The helical intramembrane region spans Pro-405–Thr-416. An intramembrane region (note=Loop between two helices) is located at residues Asp-417–Leu-421. Residues Ile-422 to Phe-438 traverse the membrane as a helical segment. At Leu-439 to Thr-472 the chain is on the cytoplasmic side. A chloride-binding site is contributed by Tyr-445.

The protein belongs to the chloride channel (TC 2.A.49) family. ClcA subfamily. Homodimer.

The protein localises to the cell inner membrane. The enzyme catalyses 2 chloride(in) + H(+)(out) = 2 chloride(out) + H(+)(in). Its function is as follows. Proton-coupled chloride transporter. Functions as antiport system and exchanges two chloride ions for 1 proton. Probably acts as an electrical shunt for an outwardly-directed proton pump that is linked to amino acid decarboxylation, as part of the extreme acid resistance (XAR) response. This chain is H(+)/Cl(-) exchange transporter ClcA, found in Klebsiella pneumoniae subsp. pneumoniae (strain ATCC 700721 / MGH 78578).